The following is a 196-amino-acid chain: Small ribosomal subunit protein uS4c (196 aa).

The S4 RNA-binding domain occupies 89–169; that stretch reads MRLDNIIFRL…LPKHLTIDTV (81 aa).

The protein belongs to the universal ribosomal protein uS4 family. In terms of assembly, part of the 30S ribosomal subunit. Contacts protein S5. The interaction surface between S4 and S5 is involved in control of translational fidelity.

It is found in the plastid. The protein localises to the chloroplast. One of the primary rRNA binding proteins, it binds directly to 16S rRNA where it nucleates assembly of the body of the 30S subunit. Its function is as follows. With S5 and S12 plays an important role in translational accuracy. In Stipellula capensis (Cape rice grass), this protein is Small ribosomal subunit protein uS4c (rps4).